The following is a 201-amino-acid chain: ATP-dependent Clp protease proteolytic subunit (201 aa).

S101 serves as the catalytic Nucleophile. H126 is a catalytic residue.

The protein belongs to the peptidase S14 family. Component of the chloroplastic Clp protease core complex.

The protein resides in the plastid. It is found in the chloroplast stroma. It carries out the reaction Hydrolysis of proteins to small peptides in the presence of ATP and magnesium. alpha-casein is the usual test substrate. In the absence of ATP, only oligopeptides shorter than five residues are hydrolyzed (such as succinyl-Leu-Tyr-|-NHMec, and Leu-Tyr-Leu-|-Tyr-Trp, in which cleavage of the -Tyr-|-Leu- and -Tyr-|-Trp bonds also occurs).. Functionally, cleaves peptides in various proteins in a process that requires ATP hydrolysis. Has a chymotrypsin-like activity. Plays a major role in the degradation of misfolded proteins. This is ATP-dependent Clp protease proteolytic subunit from Staurastrum punctulatum (Green alga).